The sequence spans 417 residues: Probable dihydrofolate synthetase (417 aa).

Position 34–37 (34–37) interacts with ATP; that stretch reads GKGS. Residues serine 58, glutamate 123, and histidine 151 each contribute to the Mg(2+) site. 2 residues coordinate ATP: arginine 274 and aspartate 289.

Belongs to the folylpolyglutamate synthase family.

It carries out the reaction 7,8-dihydropteroate + L-glutamate + ATP = 7,8-dihydrofolate + ADP + phosphate + H(+). It functions in the pathway cofactor biosynthesis; tetrahydrofolylpolyglutamate biosynthesis. Functionally, glutamate-adding enzyme which catalyzes the binding of the first glutamyl side chain to dihydropteroate. Leads to the de nove synthesis of tetrahydrofolate. de novo. The protein is Probable dihydrofolate synthetase (fol3) of Schizosaccharomyces pombe (strain 972 / ATCC 24843) (Fission yeast).